We begin with the raw amino-acid sequence, 193 residues long: dCTP deaminase, dUMP-forming (193 aa).

DCTP contacts are provided by residues 101–106 (KSSLGR), Asp-119, 127–129 (TLE), Gln-148, Tyr-162, and Gln-174. Glu-129 acts as the Proton donor/acceptor in catalysis. Residues 161 to 184 (PYGSETTGSHYQGQRGPTPSRSYQ) form a disordered region.

The protein belongs to the dCTP deaminase family. Homotrimer.

The catalysed reaction is dCTP + 2 H2O = dUMP + NH4(+) + diphosphate. Its pathway is pyrimidine metabolism; dUMP biosynthesis; dUMP from dCTP: step 1/1. Functionally, bifunctional enzyme that catalyzes both the deamination of dCTP to dUTP and the hydrolysis of dUTP to dUMP without releasing the toxic dUTP intermediate. This Bifidobacterium animalis subsp. lactis (strain AD011) protein is dCTP deaminase, dUMP-forming.